Here is a 720-residue protein sequence, read N- to C-terminus: Inactive serine protease PAMR1 (720 aa).

Residues 1–21 form the signal peptide; the sequence is MELGWWPQLGLAFLQLLLISS. Disulfide bonds link Cys128-Cys150, Cys177-Cys199, Cys239-Cys250, Cys244-Cys260, Cys262-Cys271, Cys280-Cys329, Cys315-Cys342, and Cys414-Cys442. In terms of domain architecture, CUB spans 128-236; that stretch reads CGQVLRVPKG…DGFHAIFEEI (109 aa). One can recognise an EGF-like domain in the interval 235 to 272; the sequence is EITACSSSPCFHDGTCLLDSTGSYKCACLAGYTGKHCE. Sushi domains follow at residues 278-344 and 387-444; these read RNCS…ICIK and APTK…SCIP. The 276-residue stretch at 445–720 folds into the Peptidase S1 domain; sequence ICGKTENVSA…FKDWIERNMK (276 aa). N-linked (GlcNAc...) asparagine glycosylation is present at Asn451. 3 cysteine pairs are disulfide-bonded: Cys489/Cys505, Cys630/Cys649, and Cys661/Cys697.

The protein belongs to the peptidase S1 family.

Its subcellular location is the secreted. May play a role in regeneration of skeletal muscle. This chain is Inactive serine protease PAMR1 (PAMR1), found in Bos taurus (Bovine).